The primary structure comprises 345 residues: Phosphoribosylformylglycinamidine cyclo-ligase (345 aa).

The protein belongs to the AIR synthase family.

The protein localises to the cytoplasm. The enzyme catalyses 2-formamido-N(1)-(5-O-phospho-beta-D-ribosyl)acetamidine + ATP = 5-amino-1-(5-phospho-beta-D-ribosyl)imidazole + ADP + phosphate + H(+). The protein operates within purine metabolism; IMP biosynthesis via de novo pathway; 5-amino-1-(5-phospho-D-ribosyl)imidazole from N(2)-formyl-N(1)-(5-phospho-D-ribosyl)glycinamide: step 2/2. The sequence is that of Phosphoribosylformylglycinamidine cyclo-ligase from Synechococcus sp. (strain CC9902).